The primary structure comprises 147 residues: UPF0735 ACT domain-containing protein GTNG_2535 (147 aa).

Residues 69–144 (TLFFHLEDRS…FVEKVEIVGS (76 aa)) form the ACT domain.

The protein belongs to the UPF0735 family.

This Geobacillus thermodenitrificans (strain NG80-2) protein is UPF0735 ACT domain-containing protein GTNG_2535.